We begin with the raw amino-acid sequence, 158 residues long: FUN14 domain-containing protein 1 (158 aa).

A YXXL motif is present at residues 21–24; that stretch reads YEVV. 2 consecutive transmembrane segments (helical) span residues 51–70 and 77–98; these read YSVT…AGYL and IAAT…SGYV.

It belongs to the FUN14 family.

It localises to the mitochondrion outer membrane. In terms of biological role, acts as an activator of hypoxia-induced mitophagy, an important mechanism for mitochondrial quality control. This chain is FUN14 domain-containing protein 1 (fundc1), found in Tetraodon nigroviridis (Spotted green pufferfish).